The sequence spans 101 residues: NAD(P)H-quinone oxidoreductase subunit 4L, chloroplastic (101 aa).

A run of 2 helical transmembrane segments spans residues 2-22 (MFEH…YGLI) and 61-81 (IFSI…LAIV).

Belongs to the complex I subunit 4L family. As to quaternary structure, NDH is composed of at least 16 different subunits, 5 of which are encoded in the nucleus.

It is found in the plastid. The protein localises to the chloroplast thylakoid membrane. The catalysed reaction is a plastoquinone + NADH + (n+1) H(+)(in) = a plastoquinol + NAD(+) + n H(+)(out). It carries out the reaction a plastoquinone + NADPH + (n+1) H(+)(in) = a plastoquinol + NADP(+) + n H(+)(out). Its function is as follows. NDH shuttles electrons from NAD(P)H:plastoquinone, via FMN and iron-sulfur (Fe-S) centers, to quinones in the photosynthetic chain and possibly in a chloroplast respiratory chain. The immediate electron acceptor for the enzyme in this species is believed to be plastoquinone. Couples the redox reaction to proton translocation, and thus conserves the redox energy in a proton gradient. This Dioscorea elephantipes (Elephant's foot yam) protein is NAD(P)H-quinone oxidoreductase subunit 4L, chloroplastic.